The following is a 334-amino-acid chain: Ferrochelatase 1 (334 aa).

Positions 201 and 282 each coordinate Fe cation.

The protein belongs to the ferrochelatase family.

The protein localises to the cytoplasm. The enzyme catalyses heme b + 2 H(+) = protoporphyrin IX + Fe(2+). It functions in the pathway porphyrin-containing compound metabolism; protoheme biosynthesis; protoheme from protoporphyrin-IX: step 1/1. Functionally, catalyzes the ferrous insertion into protoporphyrin IX. The polypeptide is Ferrochelatase 1 (Shewanella oneidensis (strain ATCC 700550 / JCM 31522 / CIP 106686 / LMG 19005 / NCIMB 14063 / MR-1)).